The chain runs to 353 residues: MKSMPVAPIADLRVAQLIDANLDRAREGLRVVEDWCRFGLDREDLVVTLKDWRQRLGRHHHDSYKQARSTATDQGIGLSHPAQQERHEPWHVVAANCARVQEALRVLEEFARQPDPQLAASAAAIRYGLYDLEVTVLQANAGKKRRQQLQACHLCLITTSQSDLANNDLFRTVSAALVAGIDMVQYRNKEASDLQRLTQAKELASLCRKHGALFIVNDRIDLALAVDADGVHLGQDDLPTDVARGLIGSERLLGRSTQFLAQLQKAEAEGCDYLGVGPVNSTATKPERQPIGLAYVKEASKATQLPWFAIGGINISNLEAVRQAGAKRIAVIGAIMNSKDPAATSLQLLEALR.

A unknown region spans residues 1–128; sequence MKSMPVAPIA…AASAAAIRYG (128 aa). The segment at 129–353 is thiamine-phosphate synthase; sequence LYDLEVTVLQ…TSLQLLEALR (225 aa). Residues 185–189 and Asn217 each bind 4-amino-2-methyl-5-(diphosphooxymethyl)pyrimidine; that span reads QYRNK. Mg(2+) is bound by residues Asp218 and Asp237. Ser256 is a binding site for 4-amino-2-methyl-5-(diphosphooxymethyl)pyrimidine. 282–284 provides a ligand contact to 2-[(2R,5Z)-2-carboxy-4-methylthiazol-5(2H)-ylidene]ethyl phosphate; it reads TAT. Lys285 serves as a coordination point for 4-amino-2-methyl-5-(diphosphooxymethyl)pyrimidine. Position 312 (Gly312) interacts with 2-[(2R,5Z)-2-carboxy-4-methylthiazol-5(2H)-ylidene]ethyl phosphate.

The protein belongs to the thiamine-phosphate synthase family. It depends on Mg(2+) as a cofactor.

It catalyses the reaction 2-[(2R,5Z)-2-carboxy-4-methylthiazol-5(2H)-ylidene]ethyl phosphate + 4-amino-2-methyl-5-(diphosphooxymethyl)pyrimidine + 2 H(+) = thiamine phosphate + CO2 + diphosphate. It carries out the reaction 2-(2-carboxy-4-methylthiazol-5-yl)ethyl phosphate + 4-amino-2-methyl-5-(diphosphooxymethyl)pyrimidine + 2 H(+) = thiamine phosphate + CO2 + diphosphate. The catalysed reaction is 4-methyl-5-(2-phosphooxyethyl)-thiazole + 4-amino-2-methyl-5-(diphosphooxymethyl)pyrimidine + H(+) = thiamine phosphate + diphosphate. It participates in cofactor biosynthesis; thiamine diphosphate biosynthesis; thiamine phosphate from 4-amino-2-methyl-5-diphosphomethylpyrimidine and 4-methyl-5-(2-phosphoethyl)-thiazole: step 1/1. Functionally, condenses 4-methyl-5-(beta-hydroxyethyl)thiazole monophosphate (THZ-P) and 2-methyl-4-amino-5-hydroxymethyl pyrimidine pyrophosphate (HMP-PP) to form thiamine monophosphate (TMP). The sequence is that of Thiamine-phosphate synthase from Prochlorococcus marinus (strain MIT 9303).